We begin with the raw amino-acid sequence, 330 residues long: D-lactate dehydrogenase (330 aa).

Residues 156–157 (RI), Asp176, 206–207 (VP), 233–235 (AAR), and Asp259 contribute to the NAD(+) site. Arg235 is an active-site residue. The active site involves Glu264. His296 (proton donor) is an active-site residue.

It belongs to the D-isomer specific 2-hydroxyacid dehydrogenase family.

The catalysed reaction is (R)-lactate + NAD(+) = pyruvate + NADH + H(+). This is D-lactate dehydrogenase (ldhD) from Staphylococcus aureus (strain MRSA252).